The chain runs to 37 residues: Small ribosomal subunit protein eS32 (37 aa).

This sequence belongs to the eukaryotic ribosomal protein eS32 family. In terms of assembly, part of the small ribosomal subunit.

This Pyrococcus furiosus (strain ATCC 43587 / DSM 3638 / JCM 8422 / Vc1) protein is Small ribosomal subunit protein eS32.